We begin with the raw amino-acid sequence, 606 residues long: Acetylcholinesterase (606 aa).

A signal peptide spans 1–28; that stretch reads MPSCQPGKMPAPWPWWLQLLLCIPSCVA. Cys-98 and Cys-125 are oxidised to a cystine. Ser-231 (acyl-ester intermediate) is an active-site residue. Cys-285 and Cys-296 form a disulfide bridge. A glycan (N-linked (GlcNAc...) asparagine) is linked at Asn-289. The active-site Charge relay system is Glu-358. A glycan (N-linked (GlcNAc...) asparagine) is linked at Asn-374. A disulfide bond links Cys-433 and Cys-552. The Charge relay system role is filled by His-471. Asn-484 carries an N-linked (GlcNAc...) asparagine glycan.

Belongs to the type-B carboxylesterase/lipase family. As to quaternary structure, isoform S is monomeric. Isoform T can form oligomers, including collagen-tailed forms. In terms of processing, the N-terminus is blocked. As to expression, liver and muscle contain both isoform T and isoform S. Venom gland predominantly contains isoform S.

It is found in the synapse. It localises to the secreted. The protein resides in the cell membrane. The enzyme catalyses acetylcholine + H2O = choline + acetate + H(+). Its activity is regulated as follows. Inhibited by active site inhibitors: edrophonium, trimethyl-(m-acetamidopheny1)-ammonium iodide, and trimethyl-(p-acetarnidopheny1)-ammonium iodide. Inhibited by both active and peripheral site inhibitors: decamethonium, and BW284c51. Inhibited by peripheral site inhibitors: snake acetylcholinesterase fasciculin-2, propidium, gallamine, D-tubocurarine, and tacrine. Also inhibited by antibodies Elec410 and Fab410. Its function is as follows. In muscle, it terminates signal transduction at the neuromuscular junction by rapid hydrolysis of the acetylcholine released into the synaptic cleft. In liver, its function is unclear: it could serve as a safeguard against any diffusion of acetylcholine from synapses into the circulation. In venom, its toxic role is unclear: it could result in less musculatory control by rapidly hydrolyzing acetylcholine, or that it works synergistically with alkaline phosphatase (ALP) in paralyzing prey through hypotension. The chain is Acetylcholinesterase (ACHE) from Bungarus fasciatus (Banded krait).